A 72-amino-acid polypeptide reads, in one-letter code: Translation initiation factor IF-1 (72 aa).

Residues Met1–Lys72 form the S1-like domain.

The protein belongs to the IF-1 family. As to quaternary structure, component of the 30S ribosomal translation pre-initiation complex which assembles on the 30S ribosome in the order IF-2 and IF-3, IF-1 and N-formylmethionyl-tRNA(fMet); mRNA recruitment can occur at any time during PIC assembly.

The protein resides in the cytoplasm. Functionally, one of the essential components for the initiation of protein synthesis. Stabilizes the binding of IF-2 and IF-3 on the 30S subunit to which N-formylmethionyl-tRNA(fMet) subsequently binds. Helps modulate mRNA selection, yielding the 30S pre-initiation complex (PIC). Upon addition of the 50S ribosomal subunit IF-1, IF-2 and IF-3 are released leaving the mature 70S translation initiation complex. The protein is Translation initiation factor IF-1 of Clostridium novyi (strain NT).